Here is a 1142-residue protein sequence, read N- to C-terminus: MRLTGPWKLWLWMSIFLLPASTSVTVRDKTEESCPILRIEGHQLTYDNINKLEVSGFDLGDSFSLRRAFCESDKTCFKLGSALLIRDTIKIFPKGLPEEYSVAAMFRVRRNAKKERWFLWQVLNQQNIPQISIVVDGGKKVVEFMFQATEGDVLNYIFRNRELRPLFDRQWHKLGISIQSQVISLYMDCNLIARRQTDEKDTVDFHGRTVIATRASDGKPVDIELHQLKIYCSANLIAQETCCEISDTKCPEQDGFGNIASSWVTAHASKMSSYLPAKQELKDQCQCIPNKGEAGLPGAPGSPGQKGHKGEPGENGLHGAPGFPGQKGEQGFEGSKGETGEKGEQGEKGDPALAGLNGENGLKGDLGPHGPPGPKGEKGDTGPPGPPALPGSLGIQGPQGPPGKEGQRGRRGKTGPPGKPGPPGPPGPPGIQGIHQTLGGYYNKDNKGNDEHEAGGLKGDKGETGLPGFPGSVGPKGQKGEPGEPFTKGEKGDRGEPGVIGSQGVKGEPGDPGPPGLIGSPGLKGQQGSAGSMGPRGPPGDVGLPGEHGIPGKQGIKGEKGDPGGIIGPPGLPGPKGEAGPPGKSLPGEPGLDGNPGAPGPRGPKGERGLPGVHGSPGDIGPQGIGIPGRTGAQGPAGEPGIQGPRGLPGLPGTPGTPGNDGVPGRDGKPGLPGPPGDPIALPLLGDIGALLKNFCGNCQASVPGLKSNKGEEGGAGEPGKYDSMARKGDIGPRGPPGIPGREGPKGSKGERGYPGIPGEKGDEGLQGIPGIPGAPGPTGPPGLMGRTGHPGPTGAKGEKGSDGPPGKPGPPGPPGIPFNERNGMSSLYKIKGGVNVPSYPGPPGPPGPKGDPGPVGEPGAMGLPGLEGFPGVKGDRGPAGPPGIAGMSGKPGAPGPPGVPGEPGERGPVGDIGFPGPEGPSGKPGINGKDGIPGAQGIMGKPGDRGPKGERGDQGIPGDRGSQGERGKPGLTGMKGAIGPMGPPGNKGSMGSPGHQGPPGSPGIPGIPADAVSFEEIKKYINQEVLRIFEERMAVFLSQLKLPAAMLAAQAYGRPGPPGKDGLPGPPGDPGPQGYRGQKGERGEPGIGLPGSPGLPGTSALGLPGSPGAPGPQGPPGPSGRCNPEDCLYPVSHAHQRTGGN.

The N-terminal stretch at 1-23 (MRLTGPWKLWLWMSIFLLPASTS) is a signal peptide. The region spanning 50-234 (NKLEVSGFDL…LHQLKIYCSA (185 aa)) is the Laminin G-like domain. Disordered regions lie at residues 288-680 (IPNK…GDPI), 704-1009 (PGLK…PGIP), and 1053-1142 (YGRP…TGGN). 3 consecutive Collagen-like domains span residues 292–349 (GEAG…GEKG), 350–391 (DPAL…ALPG), and 392–433 (SLGI…GIQG). The interval 292 to 351 (GEAGLPGAPGSPGQKGHKGEPGENGLHGAPGFPGQKGEQGFEGSKGETGEKGEQGEKGDP) is triple-helical region 1 (COL1). Basic and acidic residues predominate over residues 335 to 350 (SKGETGEKGEQGEKGD). The interval 370–429 (GPPGPKGEKGDTGPPGPPALPGSLGIQGPQGPPGKEGQRGRRGKTGPPGKPGPPGPPGPP) is triple-helical region 2 (COL2). The span at 390 to 404 (PGSLGIQGPQGPPGK) shows a compositional bias: low complexity. Pro residues predominate over residues 417 to 429 (PGKPGPPGPPGPP). Basic and acidic residues-rich tracts occupy residues 444–463 (KDNKGNDEHEAGGLKGDKGE) and 478–496 (QKGEPGEPFTKGEKGDRGE). The triple-helical region 3 (COL3) stretch occupies residues 448-688 (GNDEHEAGGL…PIALPLLGDI (241 aa)). Collagen-like domains are found at residues 474-516 (GPKG…GPPG), 568-624 (GPPG…GPQG), 626-678 (GIPG…PPGD), 728-778 (KGDI…APGP), 779-814 (TGPPGLMGRTGHPGPTGAKGEKGSDGPPGKPGPPGP), 845-903 (GPPG…VPGE), 904-947 (PGER…GDRG), and 948-1004 (PKGE…GSPG). Positions 640–651 (PGIQGPRGLPGL) are enriched in low complexity. The triple-helical region 4 (COL4) stretch occupies residues 700 to 818 (QASVPGLKSN…PGPPGPPGIP (119 aa)). Basic and acidic residues-rich tracts occupy residues 720-731 (GKYDSMARKGDI) and 743-752 (EGPKGSKGER). Pro residues-rich tracts occupy residues 806–817 (PGKPGPPGPPGI) and 840–852 (YPGPPGPPGPKGD). Residues 833-1012 (GGVNVPSYPG…PGIPGIPADA (180 aa)) are triple-helical region 5 (COL5). Basic and acidic residues predominate over residues 943-954 (PGDRGPKGERGD). The Cell attachment site signature appears at 952 to 954 (RGD). The tract at residues 1054–1111 (GRPGPPGKDGLPGPPGDPGPQGYRGQKGERGEPGIGLPGSPGLPGTSALGLPGSPGAP) is triple-helical region 6 (COL6). Positions 1093–1107 (SPGLPGTSALGLPGS) are enriched in low complexity. Residues 1108–1119 (PGAPGPQGPPGP) are compositionally biased toward pro residues.

Belongs to the fibril-associated collagens with interrupted helices (FACIT) family. In terms of assembly, oligomer; disulfide-linked. Post-translationally, prolines at the third position of the tripeptide repeating unit (G-X-Y) are hydroxylated in some or all of the chains. In terms of tissue distribution, localized to vascular, neuronal, mesenchymal, and some epithelial basement membrane zones in umbilical cord.

It localises to the secreted. The protein resides in the extracellular space. Its subcellular location is the extracellular matrix. Functionally, may act as a cross-bridge between fibrils and other extracellular matrix molecules. Involved in skeletal myogenesis in the developing esophagus. May play a role in organization of the pericellular matrix or the sphinteric smooth muscle. The chain is Collagen alpha-1(XIX) chain (COL19A1) from Homo sapiens (Human).